A 223-amino-acid polypeptide reads, in one-letter code: 23 kDa piroplasm membrane protein (223 aa).

The first 19 residues, 1-19 (MHKFTKVFFVAILVHTLKS), serve as a signal peptide directing secretion. The Extracellular segment spans residues 20–197 (GLVFTPVSGT…EEEKSDKKKY (178 aa)). Residue Asn-69 is glycosylated (N-linked (GlcNAc...) asparagine). The chain crosses the membrane as a helical span at residues 198 to 218 (VLMVVVVVVFVVVASLVVFLV). Residues 219–223 (KFCLK) are Cytoplasmic-facing.

The protein resides in the membrane. This is 23 kDa piroplasm membrane protein from Theileria buffeli.